Consider the following 150-residue polypeptide: 3-hydroxyacyl-[acyl-carrier-protein] dehydratase FabZ (150 aa).

H53 is a catalytic residue.

Belongs to the thioester dehydratase family. FabZ subfamily.

The protein localises to the cytoplasm. It catalyses the reaction a (3R)-hydroxyacyl-[ACP] = a (2E)-enoyl-[ACP] + H2O. In terms of biological role, involved in unsaturated fatty acids biosynthesis. Catalyzes the dehydration of short chain beta-hydroxyacyl-ACPs and long chain saturated and unsaturated beta-hydroxyacyl-ACPs. This chain is 3-hydroxyacyl-[acyl-carrier-protein] dehydratase FabZ, found in Photorhabdus laumondii subsp. laumondii (strain DSM 15139 / CIP 105565 / TT01) (Photorhabdus luminescens subsp. laumondii).